Consider the following 178-residue polypeptide: MFASRPAVHPVEAPPPTDPVEQPTGVLMKDLPGMPGTAGGLGLRVAQFVFAGVALAVMASTSDFPSVTAFCYLVAATIMQCLWSFSLAIVDIYALLVKRCLRNRRAVCLFAIGDGITAALTFGAACSSAGITVLIDNDLNICAENHCGSFKTATALAFMSWFALTPSFLLNFWSMAAR.

The segment at 1–24 (MFASRPAVHPVEAPPPTDPVEQPT) is disordered. Residues 1-37 (MFASRPAVHPVEAPPPTDPVEQPTGVLMKDLPGMPGT) are Cytoplasmic-facing. A helical membrane pass occupies residues 38–58 (AGGLGLRVAQFVFAGVALAVM). Residues 59–69 (ASTSDFPSVTA) are Extracellular-facing. The chain crosses the membrane as a helical span at residues 70 to 90 (FCYLVAATIMQCLWSFSLAIV). Residues 91–105 (DIYALLVKRCLRNRR) are Cytoplasmic-facing. Residues 106–126 (AVCLFAIGDGITAALTFGAAC) traverse the membrane as a helical segment. Residues 127–152 (SSAGITVLIDNDLNICAENHCGSFKT) are Extracellular-facing. A helical membrane pass occupies residues 153–173 (ATALAFMSWFALTPSFLLNFW). Residues 174-178 (SMAAR) lie on the Cytoplasmic side of the membrane.

Belongs to the Casparian strip membrane proteins (CASP) family. As to quaternary structure, homodimer and heterodimers.

Its subcellular location is the cell membrane. In Brachypodium distachyon (Purple false brome), this protein is CASP-like protein 5A1.